Reading from the N-terminus, the 82-residue chain is SMPPQVMVEINGMLNDGCTAFHEAKQVVEGNTIKIEVTTIRPKDAMCTQEISPFSTTIQVDAQLQPGEYTILVNDVAEALKL.

Its function is as follows. Could be a silencing control element for the regulation of the restriction system. This is an uncharacterized protein from Herpetosiphon aurantiacus (Herpetosiphon giganteus).